The sequence spans 475 residues: Glutamyl-tRNA(Gln) amidotransferase subunit A (475 aa).

Active-site charge relay system residues include Lys69 and Ser144. Ser168 (acyl-ester intermediate) is an active-site residue.

This sequence belongs to the amidase family. GatA subfamily. Heterotrimer of A, B and C subunits.

The catalysed reaction is L-glutamyl-tRNA(Gln) + L-glutamine + ATP + H2O = L-glutaminyl-tRNA(Gln) + L-glutamate + ADP + phosphate + H(+). Its function is as follows. Allows the formation of correctly charged Gln-tRNA(Gln) through the transamidation of misacylated Glu-tRNA(Gln) in organisms which lack glutaminyl-tRNA synthetase. The reaction takes place in the presence of glutamine and ATP through an activated gamma-phospho-Glu-tRNA(Gln). This Methanococcoides burtonii (strain DSM 6242 / NBRC 107633 / OCM 468 / ACE-M) protein is Glutamyl-tRNA(Gln) amidotransferase subunit A.